The following is a 404-amino-acid chain: MFITLIFLSYINIVLSNNYWARLNETITLNSNITNDTNNELGIFWNSYNNTYYNNTFNNIAICGKKGIFCECNINYNTSISNTSISNTSIYNVTNNCSLTIFLYDDNIFKTYQLVYQNYKINYTINLLLPVTSPNITYNCTNSLITCEKNDGTNTNMFLSINNITINHTNQDILTYYWNNSEFNNFTATCMINNTLNSANTTKVINCTNPLLNSYQNYFLENIHTLFYIIIFIVSGLIASIFISIITFLSLRKRKKHVEEIESPPPESNEEEQCQHDDTTSIHEPSPREPLLPKPYSRYQYNTPIYYMRPSTQPLNPFPLPNPCPPPKPCPPPKPCPPPKPCPPPKPCPPPKPCPPPKPCPPPKPCSSPESYSPPKPLPSIPLLPNIPPLSTQNISLIHVDRII.

Residues 1–16 form the signal peptide; it reads MFITLIFLSYINIVLS. Residues 17–225 lie on the Extracellular side of the membrane; the sequence is NNYWARLNET…QNYFLENIHT (209 aa). N-linked (GlcNAc...) asparagine; by host glycans are attached at residues asparagine 24, asparagine 87, asparagine 92, asparagine 96, asparagine 122, asparagine 139, asparagine 167, asparagine 193, asparagine 200, and asparagine 206. Disulfide bonds link cysteine 140–cysteine 207 and cysteine 147–cysteine 190. A helical membrane pass occupies residues 226-246; the sequence is LFYIIIFIVSGLIASIFISII. The Cytoplasmic segment spans residues 247 to 404; that stretch reads TFLSLRKRKK…ISLIHVDRII (158 aa). Positions 260–295 are disordered; sequence EIESPPPESNEEEQCQHDDTTSIHEPSPREPLLPKP. Residues 273 to 287 are compositionally biased toward basic and acidic residues; that stretch reads QCQHDDTTSIHEPSP. A run of 7 repeats spans residues 322 to 327, 328 to 333, 334 to 339, 340 to 345, 346 to 351, 352 to 357, and 358 to 363. The segment at 322 to 363 is 7 X 6 AA tandem repeats of [KN]-P-C-P-P-P; that stretch reads NPCPPPKPCPPPKPCPPPKPCPPPKPCPPPKPCPPPKPCPPP. Pro residues predominate over residues 357 to 388; the sequence is PKPCPPPKPCSSPESYSPPKPLPSIPLLPNIP. The interval 357–390 is disordered; the sequence is PKPCPPPKPCSSPESYSPPKPLPSIPLLPNIPPL.

It belongs to the asfivirus CD2 homolog protein family. In terms of assembly, both glycosylated and nonglycosylated forms interact (via C-terminus) with the host AP-1 complex. Post-translationally, cleaved into two fragments of 63 kDa and 26 kDa containing respectively the glycosylated N-terminus and the nonglycosylated C-terminus. A full-length 89-kDa glycosylated form also exists.

Its subcellular location is the host membrane. The protein resides in the virion membrane. It localises to the host Golgi apparatus. Its function is as follows. May play an immunosuppressive role by inhibiting lymphocyte proliferation and subsequently facilitating viral replication and generalization of infection. Responsible for viral hemadsorption, which may help viral spread. Increases virus replication in the tick vector at the step of virus uptake or replication in the tick gut. May play a role in the host Golgi reorganization to yield viral factories. May play a role in host cell penetration. The chain is CD2 homolog from African swine fever virus (isolate Tick/South Africa/Pretoriuskop Pr4/1996) (ASFV).